Consider the following 118-residue polypeptide: Non-specific lipid-transfer protein 2A (118 aa).

The first 26 residues, 1–26, serve as a signal peptide directing secretion; sequence MARAQLVLVALVAAALLLAGPHTTMA. 4 disulfide bridges follow: C30-C77, C40-C54, C55-C100, and C75-C114.

The protein belongs to the plant LTP family.

In terms of biological role, plant non-specific lipid-transfer proteins transfer phospholipids as well as galactolipids across membranes. May play a role in wax or cutin deposition in the cell walls of expanding epidermal cells and certain secretory tissues. This Oryza sativa subsp. japonica (Rice) protein is Non-specific lipid-transfer protein 2A (LTP2-A).